The primary structure comprises 260 residues: MTSLKLLKEKAPLVICITNDVVKNFTANGLVALGASPAMSEFPADLEDLLKYAGGLLINIGTLTDENWKLYQAALKIAEKYNVPAVLDPVACGAGEYRKKVADDLINNYKLAAIRGNAGEIASLVGIDVASKGVDSAGVDNIDEIALAANEKFNIPIVVTGEVDAIAVNGEVVTIHNGSAMMPKVIGTGCLLGAVVASFIGLEKGQELKSLETAMLVYNIAGEMAEKRPNGHLPGTFKVEFINALYEITDEDVKKFKRVK.

Substrate is bound at residue Met-39. Residues Arg-115 and Thr-160 each coordinate ATP. Gly-187 lines the substrate pocket.

Belongs to the Thz kinase family. Requires Mg(2+) as cofactor.

It carries out the reaction 5-(2-hydroxyethyl)-4-methylthiazole + ATP = 4-methyl-5-(2-phosphooxyethyl)-thiazole + ADP + H(+). It functions in the pathway cofactor biosynthesis; thiamine diphosphate biosynthesis; 4-methyl-5-(2-phosphoethyl)-thiazole from 5-(2-hydroxyethyl)-4-methylthiazole: step 1/1. Catalyzes the phosphorylation of the hydroxyl group of 4-methyl-5-beta-hydroxyethylthiazole (THZ). This chain is Hydroxyethylthiazole kinase 1, found in Streptococcus pneumoniae (strain P1031).